Reading from the N-terminus, the 114-residue chain is UPF0757 protein YmgG (114 aa).

It belongs to the UPF0757 family.

The polypeptide is UPF0757 protein YmgG (Edwardsiella ictaluri (strain 93-146)).